A 728-amino-acid chain; its full sequence is Microtubule-associated protein VP5 (728 aa).

Belongs to the reoviridae microtubule-associated protein family.

The protein localises to the virion. The protein resides in the host cytoplasm. It is found in the host cytoskeleton. Minor inner capsid component. Displays NTPase and RNA 5'-triphosphatase (RTPase) activities. May function as a cofactor of polymerase. Associates with microtubules and plays a role in the formation, structural organization and morphology of viral inclusions, where the assembly of cores and the replication of viral RNA occur. The protein is Microtubule-associated protein VP5 (S5) of Ctenopharyngodon idella (Grass carp).